Here is a 245-residue protein sequence, read N- to C-terminus: Endonuclease III (245 aa).

Residues 119–138 (MVDLFTLPGVGRKTANVILG) enclose the HhH domain. [4Fe-4S] cluster is bound by residues C198, C205, C208, and C214.

Belongs to the Nth/MutY family. Requires [4Fe-4S] cluster as cofactor.

The enzyme catalyses 2'-deoxyribonucleotide-(2'-deoxyribose 5'-phosphate)-2'-deoxyribonucleotide-DNA = a 3'-end 2'-deoxyribonucleotide-(2,3-dehydro-2,3-deoxyribose 5'-phosphate)-DNA + a 5'-end 5'-phospho-2'-deoxyribonucleoside-DNA + H(+). In terms of biological role, DNA repair enzyme that has both DNA N-glycosylase activity and AP-lyase activity. The DNA N-glycosylase activity releases various damaged pyrimidines from DNA by cleaving the N-glycosidic bond, leaving an AP (apurinic/apyrimidinic) site. The AP-lyase activity cleaves the phosphodiester bond 3' to the AP site by a beta-elimination, leaving a 3'-terminal unsaturated sugar and a product with a terminal 5'-phosphate. The chain is Endonuclease III from Mycobacterium leprae (strain TN).